We begin with the raw amino-acid sequence, 222 residues long: Small ribosomal subunit protein uS3 (222 aa).

The 69-residue stretch at 39–107 folds into the KH type-2 domain; it reads VREFLHKKLA…PVQINIEEVR (69 aa).

The protein belongs to the universal ribosomal protein uS3 family. Part of the 30S ribosomal subunit. Forms a tight complex with proteins S10 and S14.

In terms of biological role, binds the lower part of the 30S subunit head. Binds mRNA in the 70S ribosome, positioning it for translation. The chain is Small ribosomal subunit protein uS3 from Francisella tularensis subsp. tularensis (strain FSC 198).